The chain runs to 125 residues: UPF0251 protein DSY3441 (125 aa).

This sequence belongs to the UPF0251 family.

The sequence is that of UPF0251 protein DSY3441 from Desulfitobacterium hafniense (strain Y51).